The primary structure comprises 414 residues: COUP transcription factor 2 (414 aa).

A disordered region spans residues 1-72 (MAMVVSTWRD…PGGPGSDKQQ (72 aa)). Residues 27–37 (PPVPGPPPGAP) show a composition bias toward pro residues. Low complexity predominate over residues 38–57 (HTPQTPGQGGPASTPAQTAA). Threonine 51 is subject to Phosphothreonine. Positions 58–67 (GGQGGPGGPG) are enriched in gly residues. The nuclear receptor DNA-binding region spans 76-151 (HIECVVCGDK…VGMRREAVQR (76 aa)). NR C4-type zinc fingers lie at residues 79 to 99 (CVVC…CEGC) and 115 to 139 (CRAN…LKKC). The interaction with ZFPM2 stretch occupies residues 117-414 (ANRNCPIDQH…SFNWPYMAIQ (298 aa)). An NR LBD domain is found at 177–403 (YLSGYISLLL…TLIRDMLLSG (227 aa)). Residues 337–414 (LQEKSQCALE…SFNWPYMAIQ (78 aa)) form an important for dimerization region.

It belongs to the nuclear hormone receptor family. NR2 subfamily. In terms of assembly, interacts with SQSTM1. Binds DNA as a dimer; homodimer or heterodimer with NR2F6. Interacts with NCOA1, NCOA2, NCOA3 and PPARGC1A. Interacts with ZFPM2.

The protein localises to the nucleus. Ligand-activated transcription factor. Activated by high concentrations of 9-cis-retinoic acid and all-trans-retinoic acid, but not by dexamethasone, cortisol or progesterone (in vitro). Regulation of the apolipoprotein A-I gene transcription. Binds to DNA site A. May be required to establish ovary identity during early gonad development. The protein is COUP transcription factor 2 (NR2F2) of Bos taurus (Bovine).